The chain runs to 178 residues: ATP-dependent protease subunit HslV (178 aa).

Residue Thr-7 is part of the active site. Residues Gly-162, Cys-165, and Thr-168 each contribute to the Na(+) site.

The protein belongs to the peptidase T1B family. HslV subfamily. In terms of assembly, a double ring-shaped homohexamer of HslV is capped on each side by a ring-shaped HslU homohexamer. The assembly of the HslU/HslV complex is dependent on binding of ATP.

The protein resides in the cytoplasm. The enzyme catalyses ATP-dependent cleavage of peptide bonds with broad specificity.. Its activity is regulated as follows. Allosterically activated by HslU binding. In terms of biological role, protease subunit of a proteasome-like degradation complex believed to be a general protein degrading machinery. This Janthinobacterium sp. (strain Marseille) (Minibacterium massiliensis) protein is ATP-dependent protease subunit HslV.